The chain runs to 234 residues: Phosphoribosylaminoimidazole-succinocarboxamide synthase (234 aa).

This sequence belongs to the SAICAR synthetase family.

It catalyses the reaction 5-amino-1-(5-phospho-D-ribosyl)imidazole-4-carboxylate + L-aspartate + ATP = (2S)-2-[5-amino-1-(5-phospho-beta-D-ribosyl)imidazole-4-carboxamido]succinate + ADP + phosphate + 2 H(+). The protein operates within purine metabolism; IMP biosynthesis via de novo pathway; 5-amino-1-(5-phospho-D-ribosyl)imidazole-4-carboxamide from 5-amino-1-(5-phospho-D-ribosyl)imidazole-4-carboxylate: step 1/2. In Clostridium botulinum (strain ATCC 19397 / Type A), this protein is Phosphoribosylaminoimidazole-succinocarboxamide synthase.